The chain runs to 89 residues: Small ribosomal subunit protein uS15 (89 aa).

The protein belongs to the universal ribosomal protein uS15 family. Part of the 30S ribosomal subunit. Forms a bridge to the 50S subunit in the 70S ribosome, contacting the 23S rRNA.

In terms of biological role, one of the primary rRNA binding proteins, it binds directly to 16S rRNA where it helps nucleate assembly of the platform of the 30S subunit by binding and bridging several RNA helices of the 16S rRNA. Forms an intersubunit bridge (bridge B4) with the 23S rRNA of the 50S subunit in the ribosome. The polypeptide is Small ribosomal subunit protein uS15 (Colwellia psychrerythraea (strain 34H / ATCC BAA-681) (Vibrio psychroerythus)).